The sequence spans 321 residues: Polyprenyl transferase cle5 (321 aa).

The next 9 helical transmembrane spans lie at 26–46, 57–77, 107–127, 132–149, 159–179, 189–209, 232–252, 262–282, and 300–320; these read PLLATFSGVWATILAGSHKIT, VLSQALLCFICSFVFCGAGMV, EALVWMAFQFISSWVLVSWML, VQAAMLPVTLSTILYPFA, IYPQYLLGFTLAYPSLIGTLA, LWASINQSLPMFVTVFTWTLY, VLAGSYIHHLLVVLAVLVLGA, SQWLWGGWMGVWTWSFLGQLV, and FALGVWTVFVCVVELLIGGNG.

It belongs to the UbiA prenyltransferase family. It depends on Mg(2+) as a cofactor.

The protein localises to the membrane. It participates in secondary metabolite biosynthesis; terpenoid biosynthesis. In terms of biological role, polyprenyl transferase; part of the cluster A that mediates the biosynthesis of chevalone E and its oxidized derivatives that possess a unique five-membered lactone ring and can synergistically enhance the cytotoxicity of doxorubicin (DOX) in breast cancer cells. Within the pathway, cle5 takes part to the biosynthesis of the molecular scaffold by catalyzing the C-3 geranylgeranylation reaction of triacetic acid lactone (TAL) produced by cle1. The molecular scaffold is commonly biosynthesized by a series of enzymes including the non-reducing polyketide synthase (NR-PKS) cle1 that produces the alpha-pyrone triacetic acid lactone (TAL); The membrane-bound prenyltransferase cle5 that accepts TAL as its substrate to perform a C-3 geranylgeranylation reaction, in which the pathway-dedicated GGPS cle6 is required to provide GGPP, the other substrate of cle5; the FAD-dependent monooxygenase Cle3 that forms an (S)-epoxide ring at the terminal olefin of the geranylgeranyl group; and the terpene cyclase Cle7 that catalyzes the cyclization of the prenyl group that yields the pentacyclic pathway intermediate chevalone E. Chevalone E can derivatize into seven new oxidized analogs by the cytochrome P450 monooxygenases cle2 (acting at C-20) and cle4 (acting at C-11 and C-12). The sequence is that of Polyprenyl transferase cle5 from Aspergillus versicolor.